The following is an 82-amino-acid chain: Turripeptide Gsp9.2 (82 aa).

Residues 1–23 (MMAKLMITVMMVLLLSLQQGADG) form the signal peptide. A propeptide spanning residues 24 to 46 (RSERWRKNQMAASSIMRNLITAR) is cleaved from the precursor. 4-hydroxyproline is present on residues Pro49 and Pro50. Intrachain disulfides connect Cys53-Cys68, Cys58-Cys72, and Cys64-Cys79. Glu56 carries the post-translational modification 4-carboxyglutamate.

The protein belongs to the Pg turripeptide superfamily. Expressed by the venom duct.

It localises to the secreted. This Gemmula speciosa (Splendid gem-turris) protein is Turripeptide Gsp9.2.